The primary structure comprises 334 residues: Nucleoid-associated protein YpsIP31758_2721 (334 aa).

It belongs to the YejK family.

Its subcellular location is the cytoplasm. The protein resides in the nucleoid. This is Nucleoid-associated protein YpsIP31758_2721 from Yersinia pseudotuberculosis serotype O:1b (strain IP 31758).